We begin with the raw amino-acid sequence, 423 residues long: L-cysteine:1D-myo-inositol 2-amino-2-deoxy-alpha-D-glucopyranoside ligase (423 aa).

Cysteine 43 serves as a coordination point for Zn(2+). L-cysteinyl-5'-AMP-binding positions include 43-46 (CGIT), threonine 58, and 81-83 (NVT). Residues 45–55 (ITPYDATHMGH) carry the 'HIGH' region motif. Positions 199–204 (ERGGDP) match the 'ERGGDP' region motif. Tryptophan 240 is an L-cysteinyl-5'-AMP binding site. Cysteine 244 is a Zn(2+) binding site. Residue 262–264 (GSD) coordinates L-cysteinyl-5'-AMP. Histidine 269 lines the Zn(2+) pocket. Valine 295 contacts L-cysteinyl-5'-AMP. The short motif at 301 to 305 (KMSKS) is the 'KMSKS' region element.

This sequence belongs to the class-I aminoacyl-tRNA synthetase family. MshC subfamily. Monomer. Zn(2+) is required as a cofactor.

It catalyses the reaction 1D-myo-inositol 2-amino-2-deoxy-alpha-D-glucopyranoside + L-cysteine + ATP = 1D-myo-inositol 2-(L-cysteinylamino)-2-deoxy-alpha-D-glucopyranoside + AMP + diphosphate + H(+). In terms of biological role, catalyzes the ATP-dependent condensation of GlcN-Ins and L-cysteine to form L-Cys-GlcN-Ins. The sequence is that of L-cysteine:1D-myo-inositol 2-amino-2-deoxy-alpha-D-glucopyranoside ligase from Renibacterium salmoninarum (strain ATCC 33209 / DSM 20767 / JCM 11484 / NBRC 15589 / NCIMB 2235).